A 499-amino-acid polypeptide reads, in one-letter code: Endoglucanase (499 aa).

An N-terminal signal peptide occupies residues 1–29; sequence MKRSISIFITCLLITLLTMGGMIASPASA. Substrate-binding positions include H65, 69-70, Y96, and H131; that span reads WY. The active-site Proton donor is the E169. Y231 provides a ligand contact to substrate. Residue E257 is the Nucleophile of the active site. Residues 263–264, W291, and 296–298 contribute to the substrate site; these read AS and KQE. The 150-residue stretch at 350 to 499 folds into the CBM3 domain; that stretch reads QENGISVQYR…GKLIWGTEPN (150 aa).

It belongs to the glycosyl hydrolase 5 (cellulase A) family.

It catalyses the reaction Endohydrolysis of (1-&gt;4)-beta-D-glucosidic linkages in cellulose, lichenin and cereal beta-D-glucans.. This chain is Endoglucanase (eglS), found in Bacillus subtilis (strain 168).